Reading from the N-terminus, the 88-residue chain is Stannin (88 aa).

Residues 1–10 (MSIMDHSPTT) are Mitochondrial intermembrane-facing. The helical transmembrane segment at 11–31 (GVVTVIVILIAIAALGALILG) threads the bilayer. Residues 32–88 (CWCYLRLQRISQSEDEESIVGDGETKEPFLLVQYSAKGPCVERKAKLMTANSPEVHG) lie on the Cytoplasmic side of the membrane. 2 positions are modified to phosphoserine: S49 and S83.

Belongs to the stannin family. In terms of assembly, monomer.

It is found in the mitochondrion outer membrane. Plays a role in the toxic effects of organotins. Plays a role in endosomal maturation. The chain is Stannin (Snn) from Mus musculus (Mouse).